Here is a 391-residue protein sequence, read N- to C-terminus: GDSL esterase/lipase 22 (391 aa).

The N-terminal stretch at 1 to 29 is a signal peptide; sequence MMANNCNLVSVLCVILVLTLFHNPITVAG. Serine 43 serves as the catalytic Nucleophile. N-linked (GlcNAc...) asparagine glycosylation is found at asparagine 105, asparagine 165, and asparagine 288. Active-site residues include aspartate 322 and histidine 325. The interval 372–391 is disordered; it reads PATVHASDSSSSTSRGYEYY.

The protein belongs to the 'GDSL' lipolytic enzyme family. As to quaternary structure, component of the PYK10 complex, at least composed of PYK10/BGLU23, BGLU21, BGLU22, JAL22, JAL23, PBP1/JAL30, PBP2/JAL31, JAL32, JAL33, JAL34, JAL35, GLL22 and GLL23.

It localises to the secreted. This is GDSL esterase/lipase 22 (GLL22) from Arabidopsis thaliana (Mouse-ear cress).